Here is a 204-residue protein sequence, read N- to C-terminus: ATP phosphoribosyltransferase (204 aa).

It belongs to the ATP phosphoribosyltransferase family. Short subfamily. Heteromultimer composed of HisG and HisZ subunits.

The protein resides in the cytoplasm. The catalysed reaction is 1-(5-phospho-beta-D-ribosyl)-ATP + diphosphate = 5-phospho-alpha-D-ribose 1-diphosphate + ATP. The protein operates within amino-acid biosynthesis; L-histidine biosynthesis; L-histidine from 5-phospho-alpha-D-ribose 1-diphosphate: step 1/9. In terms of biological role, catalyzes the condensation of ATP and 5-phosphoribose 1-diphosphate to form N'-(5'-phosphoribosyl)-ATP (PR-ATP). Has a crucial role in the pathway because the rate of histidine biosynthesis seems to be controlled primarily by regulation of HisG enzymatic activity. This is ATP phosphoribosyltransferase from Leptospira biflexa serovar Patoc (strain Patoc 1 / Ames).